Reading from the N-terminus, the 220-residue chain is Cell division protein SepF (220 aa).

Residues 1-120 form a disordered region; it reads MAIKDAFNKM…RREQYQHAAH (120 aa). Over residues 26–35 the composition is skewed to basic and acidic residues; it reads LSSKKQEEPV. A compositionally biased stretch (low complexity) spans 39-79; sequence QQTSRPNQQQQAARASQPQQPKQARPQMQAQQRPQSQSRAA. Residues 93-102 are compositionally biased toward basic and acidic residues; the sequence is VSHDYNDRRA.

The protein belongs to the SepF family. Homodimer. Interacts with FtsZ.

The protein resides in the cytoplasm. In terms of biological role, cell division protein that is part of the divisome complex and is recruited early to the Z-ring. Probably stimulates Z-ring formation, perhaps through the cross-linking of FtsZ protofilaments. Its function overlaps with FtsA. The chain is Cell division protein SepF from Streptococcus equi subsp. equi (strain 4047).